Here is a 143-residue protein sequence, read N- to C-terminus: Putative pre-16S rRNA nuclease (143 aa).

It belongs to the YqgF nuclease family.

The protein resides in the cytoplasm. Its function is as follows. Could be a nuclease involved in processing of the 5'-end of pre-16S rRNA. The sequence is that of Putative pre-16S rRNA nuclease from Leuconostoc mesenteroides subsp. mesenteroides (strain ATCC 8293 / DSM 20343 / BCRC 11652 / CCM 1803 / JCM 6124 / NCDO 523 / NBRC 100496 / NCIMB 8023 / NCTC 12954 / NRRL B-1118 / 37Y).